The sequence spans 414 residues: Serine hydroxymethyltransferase (414 aa).

(6S)-5,6,7,8-tetrahydrofolate-binding positions include leucine 121 and 125 to 127 (GHL). N6-(pyridoxal phosphate)lysine is present on lysine 229.

Belongs to the SHMT family. In terms of assembly, homodimer. It depends on pyridoxal 5'-phosphate as a cofactor.

Its subcellular location is the cytoplasm. The catalysed reaction is (6R)-5,10-methylene-5,6,7,8-tetrahydrofolate + glycine + H2O = (6S)-5,6,7,8-tetrahydrofolate + L-serine. It functions in the pathway one-carbon metabolism; tetrahydrofolate interconversion. The protein operates within amino-acid biosynthesis; glycine biosynthesis; glycine from L-serine: step 1/1. In terms of biological role, catalyzes the reversible interconversion of serine and glycine with tetrahydrofolate (THF) serving as the one-carbon carrier. This reaction serves as the major source of one-carbon groups required for the biosynthesis of purines, thymidylate, methionine, and other important biomolecules. Also exhibits THF-independent aldolase activity toward beta-hydroxyamino acids, producing glycine and aldehydes, via a retro-aldol mechanism. In Verminephrobacter eiseniae (strain EF01-2), this protein is Serine hydroxymethyltransferase.